The chain runs to 384 residues: S-adenosylmethionine synthase (384 aa).

ATP is bound at residue histidine 15. Aspartate 17 is a binding site for Mg(2+). Glutamate 43 lines the K(+) pocket. Positions 56 and 99 each coordinate L-methionine. The interval 99–109 (QSPDINQGVDR) is flexible loop. Residues 164-166 (DAK), 230-231 (RF), aspartate 239, 245-246 (RK), alanine 262, and lysine 266 contribute to the ATP site. An L-methionine-binding site is contributed by aspartate 239. Lysine 270 contacts L-methionine.

Belongs to the AdoMet synthase family. Homotetramer; dimer of dimers. The cofactor is Mg(2+). Requires K(+) as cofactor.

Its subcellular location is the cytoplasm. It catalyses the reaction L-methionine + ATP + H2O = S-adenosyl-L-methionine + phosphate + diphosphate. Its pathway is amino-acid biosynthesis; S-adenosyl-L-methionine biosynthesis; S-adenosyl-L-methionine from L-methionine: step 1/1. Catalyzes the formation of S-adenosylmethionine (AdoMet) from methionine and ATP. The overall synthetic reaction is composed of two sequential steps, AdoMet formation and the subsequent tripolyphosphate hydrolysis which occurs prior to release of AdoMet from the enzyme. The polypeptide is S-adenosylmethionine synthase (Salmonella heidelberg (strain SL476)).